A 311-amino-acid chain; its full sequence is GTPase Era (311 aa).

The Era-type G domain maps to 16-188; sequence HAGFVAIVGK…REQLLEVLPE (173 aa). Residues 24–31 are G1; the sequence is GKPNVGKS. GTP is bound at residue 24–31; the sequence is GKPNVGKS. The tract at residues 50 to 54 is G2; that stretch reads QTTRR. The G3 stretch occupies residues 71–74; sequence DTPG. GTP contacts are provided by residues 71–75 and 133–136; these read DTPGL and NKTD. A G4 region spans residues 133 to 136; that stretch reads NKTD. The interval 166 to 168 is G5; sequence LSA. The 78-residue stretch at 219–296 folds into the KH type-2 domain; it reads LRDELPYAVA…YLGLEVIVIP (78 aa).

The protein belongs to the TRAFAC class TrmE-Era-EngA-EngB-Septin-like GTPase superfamily. Era GTPase family. As to quaternary structure, monomer.

The protein resides in the cytoplasm. It is found in the cell membrane. An essential GTPase that binds both GDP and GTP, with rapid nucleotide exchange. Plays a role in 16S rRNA processing and 30S ribosomal subunit biogenesis and possibly also in cell cycle regulation and energy metabolism. This chain is GTPase Era, found in Deinococcus radiodurans (strain ATCC 13939 / DSM 20539 / JCM 16871 / CCUG 27074 / LMG 4051 / NBRC 15346 / NCIMB 9279 / VKM B-1422 / R1).